A 757-amino-acid chain; its full sequence is Alcohol dehydrogenase (quinone), dehydrogenase subunit (757 aa).

Residues 1-34 (MTSGLLTPIKVTKKRLLSCAAALAFSAAVPVAFA) form the signal peptide. Gln35 carries the post-translational modification Pyrrolidone carboxylic acid. Position 95 (Glu95) interacts with pyrroloquinoline quinone. A disulfide bridge links Cys141 with Cys142. Arg147 contacts pyrroloquinoline quinone. A Ca(2+)-binding site is contributed by Glu215. Thr277 is a binding site for pyrroloquinoline quinone. Ca(2+) is bound by residues Asn297 and Asp342. Asp342 (proton acceptor) is an active-site residue. Positions 369 and 588 each coordinate pyrroloquinoline quinone. Residues 640 to 719 (ARQKDGYFMY…DIRNFIVKRA (80 aa)) form the Cytochrome c domain. Residues Cys653, Cys656, His657, and Met696 each contribute to the heme c site. A disordered region spans residues 726–757 (EVKARENSTGVPNDQFLNVPQSTADVPTADHP). Residues 732–750 (NSTGVPNDQFLNVPQSTAD) are compositionally biased toward polar residues.

This sequence belongs to the bacterial PQQ dehydrogenase family. The alcohol dehydrogenase multicomponent enzyme system is composed of a dehydrogenase subunit I (AdhA), a cytochrome c subunit II (AdhB) and a subunit III (AdhS). It depends on pyrroloquinoline quinone as a cofactor. Requires Ca(2+) as cofactor. The cofactor is heme c.

It is found in the cell membrane. The enzyme catalyses ethanol + a ubiquinone = a ubiquinol + acetaldehyde. 2,6-dichloro-4-dicyanovinylphenol (PC16) and antimycin A inhibit ubiquinol oxidation activity more selectively than the ubiquinone reductase activity. Dehydrogenase component of the alcohol dehydrogenase multicomponent enzyme system which is involved in the production of acetic acid and in the ethanol oxidase respiratory chain. Quinohemoprotein alcohol dehydrogenase (ADH) catalyzes the oxidation of ethanol to acetaldehyde by transferring electrons to the ubiquinone embedded in the membrane phospholipids. The electrons transfer from ethanol to membranous ubiquinone occurs from pyrroloquinoline quinone (PQQ) to one heme c in subunit I (AdhA), and finally to two heme c in subunit II (AdhB). Besides ubiquinone reduction, ADH also has a ubiquinol (QH2) oxidation reaction which mediates electron transfer from ubiquinol to the non-energy generating bypass oxidase system. The electrons transfer occurs from ubiquinol (QH2) to the additional heme c within subunit II (AdhB). Also able to use quinone analogs such as 2,3-dimethoxy-5-methyl-6-n-decyl-1,4-benzoquinone (DB) and 2,3-dimethoxy-5-methyl-6-n-pentyl-1,4-benzoquinone (PB). The polypeptide is Alcohol dehydrogenase (quinone), dehydrogenase subunit (Gluconobacter oxydans (strain 621H) (Gluconobacter suboxydans)).